Consider the following 178-residue polypeptide: Fimbrial adapter PapK (178 aa).

A signal peptide spans 1–21 (MIKSTGALLLFAALSAGQAIA).

The protein resides in the secreted. The protein localises to the fimbrium. Adapter that links the pilus rod to the base of the tip fibrillum. Regulates the length of the tip fibrillum and joins it to the pilus rod. Pili are polar filaments radiating from the surface of the bacterium to a length of 0.5-1.5 micrometers and numbering 100-300 per cell, and enable bacteria to colonize the epithelium of specific host organs. The sequence is that of Fimbrial adapter PapK (papK) from Escherichia coli O6:H1 (strain CFT073 / ATCC 700928 / UPEC).